The sequence spans 284 residues: N-methyltransferase sirN (284 aa).

The protein belongs to the methyltransferase superfamily. LaeA methyltransferase family.

Its pathway is mycotoxin biosynthesis. In terms of biological role, N-methyltransferase; part of the gene cluster that mediates the biosynthesis of sirodesmin PL, an epipolythiodioxopiperazine (ETP) characterized by a disulfide bridged cyclic dipeptide and that acts as a phytotoxin which is involved in the blackleg didease of canola. SirD catalyzes the O-prenylation of L-tyrosine (L-Tyr) in the presence of dimethylallyl diphosphate (DMAPP) to yield 4-O-dimethylallyl-L-Tyr, and therefore represents probably the first pathway-specific enzyme in the biosynthesis of sirodesmin PL. 4-O-dimethylallyl-L-Tyr, then undergoes condensation with L-Ser in a reaction catalyzed by the non-ribosomal peptide synthase sirP to form the diketopiperazine (DKP) backbone. Further bishydroxylation of the DKP performed by the cytochrome P450 monooxygenase sirC leads to the production of the intermediate phomamide. This step is essential to form the reactive thiol group required for toxicity of sirodesmin PL. The next steps of sirodesmin biosynthesis are not well understood yet but some predictions could be made from intermediate compounds identification. Phomamide is converted into phomalizarine via oxidation, probably by sirT. Further oxidation, methylation (by sirM or sirN) and reduction steps convert phomalizarine to deacetyl sirodesmin. Finally, acetyltransferase sirH probably acetylates deacetyl sirodesmin to produce sirodesmin PL. The polypeptide is N-methyltransferase sirN (Leptosphaeria maculans (Blackleg fungus)).